The sequence spans 1213 residues: Protein jagged-1b (1213 aa).

The first 26 residues, 1–26 (MILRRSSVFSAFYLHAFLLCLRTTVS), serve as a signal peptide directing secretion. Residues 27 to 1064 (DASGHFELEI…HQIPSPKTDY (1038 aa)) lie on the Extracellular side of the membrane. N139 carries an N-linked (GlcNAc...) asparagine glycan. A DSL domain is found at 182 to 226 (VTCLEHYYGFGCNKFCRPRDEFFGHYTCDQNGNKTCLEGWTGPDC). Cystine bridges form between C184–C193 and C197–C209. N214 carries an N-linked (GlcNAc...) asparagine glycan. Intrachain disulfides connect C217-C226, C231-C242, C235-C248, C250-C259, C262-C273, C268-C279, C281-C290, C297-C309, C303-C319, C321-C330, C337-C348, C342-C357, C359-C368, C375-C386, C380-C395, C397-C406, C413-C424, C418-C433, C435-C444, C451-C461, C455-C470, C472-C481, C488-C499, C493-C508, C510-C519, C526-C537, C531-C546, C548-C557, C596-C612, C614-C623, C630-C641, C635-C650, C652-C661, C668-C679, C673-C688, C690-C699, C706-C717, C711-C726, and C728-C737. One can recognise an EGF-like 1 domain in the interval 227 to 260 (NTAICRQGCSTEHGSCKQPGGCKCLYGWQGPYCD). Positions 261 to 291 (KCIPHPGCVHGTCVEPWQCLCDTNWGGQLCD) constitute an EGF-like 2; atypical domain. 2 EGF-like domains span residues 293-331 (DLNY…VNCE) and 333-369 (AEHA…TSCE). In terms of domain architecture, EGF-like 5; calcium-binding spans 371 to 407 (NVDDCTPNQCKHGGTCQDLVNGFKCACPPHWTGKTCQ). The EGF-like 6; calcium-binding domain occupies 409 to 445 (DANECEDKPCVNAKSCHNLIGAYFCECLPGWSGQNCD). The EGF-like 7; calcium-binding domain occupies 447 to 482 (NINDCKGQCLNGGTCKDLVNGYRCLCPPGYTGEQCE). The EGF-like 8; calcium-binding domain occupies 484–520 (DVDECASSPCLNGGRCQDEVNGFQCLCPAGFSGQLCQ). EGF-like domains lie at 522–558 (DIDY…KNCS) and 592–624 (SSNV…TYCH). Residue N556 is glycosylated (N-linked (GlcNAc...) asparagine). One can recognise an EGF-like 11; calcium-binding domain in the interval 626-662 (NINDCESNPCRNGGTCIDKVNVYQCICADGWEGVHCE). The EGF-like 12; calcium-binding domain occupies 664 to 700 (NIDDCSLNPCLNKGACQDLVNDFYCECRNGWKGKTCH). The 37-residue stretch at 702 to 738 (RDSQCDEATCNNGGTCHDEGDTFKCRCSPGWEGATCN) folds into the EGF-like 13 domain. N742 carries an N-linked (GlcNAc...) asparagine glycan. 9 disulfide bridges follow: C745-C756, C750-C765, C767-C776, C783-C794, C788-C803, C805-C814, C821-C832, C826-C841, and C843-C852. The EGF-like 14 domain occupies 746–777 (LPNPCENGGTCVVNGDSFNCVCKEGWEGSTCT). The 37-residue stretch at 779–815 (NTNDCNPHPCYNSGTCVDGENWYRCECAPGFAGPDCR) folds into the EGF-like 15; calcium-binding domain. The EGF-like 16; calcium-binding domain maps to 817–853 (NINECQSSPCAFGSTCVDEINGYRCLCPPGRIGPDCQ). Positions 860–914 (CIANGQVTADGAKWEEDCNICQCQNGRIHCTMMWCGPKSCRIGKARGGCPASQSC) constitute a VWFC domain. The 39-residue stretch at 918 to 956 (KEEQCFVKPCPSLGECWPSAPPPPSKCHASFSYQDDSCA) folds into the EGF-like 17 domain. N-linked (GlcNAc...) asparagine glycans are attached at residues N957, N988, and N1042. Residues 1065 to 1087 (LVPLLSSIFIVLWIFALASAFLW) form a helical membrane-spanning segment. Residues 1088 to 1213 (CIHRRRKQNT…QSLNRMEYIV (126 aa)) are Cytoplasmic-facing. The segment at 1181–1202 (EERAPNKNPNWTNKQDNRDLET) is disordered.

Its subcellular location is the membrane. The protein resides in the cell membrane. Ligand for Notch receptors and involved in the mediation of Notch signaling. Seems to be involved in cell-fate decisions. In Danio rerio (Zebrafish), this protein is Protein jagged-1b (jag1b).